Consider the following 379-residue polypeptide: Proton extrusion protein PxcA (379 aa).

Transmembrane regions (helical) follow at residues 153–173 (TLVS…LQQI), 254–274 (AIKN…VCLF), 300–320 (FVII…GWTV), and 337–357 (FIDL…KYWI).

The protein belongs to the CemA family.

It localises to the cell inner membrane. Functionally, required for H(+) efflux immediately after light irradiation to form a rapid H(+) concentration gradient across the thylakoid membranes. Together with PxcL, contributes to transient H(+) uptake following dark to light transition. This Synechococcus sp. (strain RCC307) protein is Proton extrusion protein PxcA.